Reading from the N-terminus, the 193-residue chain is dITP/XTP pyrophosphatase (193 aa).

Substrate is bound at residue 7-12 (SENENK). The active-site Proton acceptor is Asp-65. Asp-65 contacts Mg(2+). Substrate contacts are provided by residues Ser-66, 144–147 (FGYD), Lys-167, and 172–173 (HR).

This sequence belongs to the HAM1 NTPase family. As to quaternary structure, homodimer. Mg(2+) is required as a cofactor.

It carries out the reaction XTP + H2O = XMP + diphosphate + H(+). The enzyme catalyses dITP + H2O = dIMP + diphosphate + H(+). The catalysed reaction is ITP + H2O = IMP + diphosphate + H(+). Pyrophosphatase that catalyzes the hydrolysis of nucleoside triphosphates to their monophosphate derivatives, with a high preference for the non-canonical purine nucleotides XTP (xanthosine triphosphate), dITP (deoxyinosine triphosphate) and ITP. Seems to function as a house-cleaning enzyme that removes non-canonical purine nucleotides from the nucleotide pool, thus preventing their incorporation into DNA/RNA and avoiding chromosomal lesions. In Tropheryma whipplei (strain TW08/27) (Whipple's bacillus), this protein is dITP/XTP pyrophosphatase.